The primary structure comprises 317 residues: Porphobilinogen deaminase (317 aa).

At C242 the chain carries S-(dipyrrolylmethanemethyl)cysteine.

The protein belongs to the HMBS family. As to quaternary structure, monomer. Dipyrromethane is required as a cofactor.

The enzyme catalyses 4 porphobilinogen + H2O = hydroxymethylbilane + 4 NH4(+). It participates in porphyrin-containing compound metabolism; protoporphyrin-IX biosynthesis; coproporphyrinogen-III from 5-aminolevulinate: step 2/4. Its function is as follows. Tetrapolymerization of the monopyrrole PBG into the hydroxymethylbilane pre-uroporphyrinogen in several discrete steps. The polypeptide is Porphobilinogen deaminase (Colwellia psychrerythraea (strain 34H / ATCC BAA-681) (Vibrio psychroerythus)).